A 329-amino-acid polypeptide reads, in one-letter code: Ketol-acid reductoisomerase (NADP(+)) (329 aa).

The region spanning 2–182 (TQLFYDTDAD…GGTRAGILET (181 aa)) is the KARI N-terminal Rossmann domain. Residues 25 to 28 (YGSQ), Ser51, Ser53, and 83 to 86 (DEFQ) each bind NADP(+). Residue His108 is part of the active site. Gly134 contributes to the NADP(+) binding site. The KARI C-terminal knotted domain maps to 183-328 (NFKEETETDL…KGLRSMFSWL (146 aa)). Mg(2+) contacts are provided by Asp191, Glu195, Glu227, and Glu231. Ser252 provides a ligand contact to substrate.

Belongs to the ketol-acid reductoisomerase family. The cofactor is Mg(2+).

It carries out the reaction (2R)-2,3-dihydroxy-3-methylbutanoate + NADP(+) = (2S)-2-acetolactate + NADPH + H(+). The enzyme catalyses (2R,3R)-2,3-dihydroxy-3-methylpentanoate + NADP(+) = (S)-2-ethyl-2-hydroxy-3-oxobutanoate + NADPH + H(+). The protein operates within amino-acid biosynthesis; L-isoleucine biosynthesis; L-isoleucine from 2-oxobutanoate: step 2/4. It participates in amino-acid biosynthesis; L-valine biosynthesis; L-valine from pyruvate: step 2/4. Involved in the biosynthesis of branched-chain amino acids (BCAA). Catalyzes an alkyl-migration followed by a ketol-acid reduction of (S)-2-acetolactate (S2AL) to yield (R)-2,3-dihydroxy-isovalerate. In the isomerase reaction, S2AL is rearranged via a Mg-dependent methyl migration to produce 3-hydroxy-3-methyl-2-ketobutyrate (HMKB). In the reductase reaction, this 2-ketoacid undergoes a metal-dependent reduction by NADPH to yield (R)-2,3-dihydroxy-isovalerate. In Prochlorococcus marinus (strain AS9601), this protein is Ketol-acid reductoisomerase (NADP(+)).